Here is a 279-residue protein sequence, read N- to C-terminus: NADPH-dependent 7-cyano-7-deazaguanine reductase (279 aa).

86–88 (IES) is a substrate binding site. 88-89 (SK) is an NADPH binding site. The Thioimide intermediate role is filled by C187. Catalysis depends on D194, which acts as the Proton donor. A substrate-binding site is contributed by 226–227 (HE). Residue 255–256 (RG) coordinates NADPH.

It belongs to the GTP cyclohydrolase I family. QueF type 2 subfamily. Homodimer.

The protein resides in the cytoplasm. The enzyme catalyses 7-aminomethyl-7-carbaguanine + 2 NADP(+) = 7-cyano-7-deazaguanine + 2 NADPH + 3 H(+). It functions in the pathway tRNA modification; tRNA-queuosine biosynthesis. Functionally, catalyzes the NADPH-dependent reduction of 7-cyano-7-deazaguanine (preQ0) to 7-aminomethyl-7-deazaguanine (preQ1). This chain is NADPH-dependent 7-cyano-7-deazaguanine reductase, found in Pasteurella multocida (strain Pm70).